A 140-amino-acid polypeptide reads, in one-letter code: Gonadotropin subunit beta-2 (140 aa).

An N-terminal signal peptide occupies residues 1–23; the sequence is MGTPVKILVVLFSVIVLLAVAQS. 6 disulfides stabilise this stretch: Cys-29/Cys-77, Cys-43/Cys-92, Cys-46/Cys-130, Cys-54/Cys-108, Cys-58/Cys-110, and Cys-113/Cys-120. The N-linked (GlcNAc...) asparagine glycan is linked to Asn-33.

It belongs to the glycoprotein hormones subunit beta family. Heterodimer of an alpha and a beta chain.

The protein localises to the secreted. Involved in gametogenesis and steroidogenesis. This chain is Gonadotropin subunit beta-2 (cgbb), found in Carassius auratus (Goldfish).